Here is a 317-residue protein sequence, read N- to C-terminus: Aspartate carbamoyltransferase catalytic subunit (317 aa).

Carbamoyl phosphate is bound by residues R66 and T67. An L-aspartate-binding site is contributed by K94. 3 residues coordinate carbamoyl phosphate: R116, H144, and Q147. The L-aspartate site is built by R177 and R231. G272 and P273 together coordinate carbamoyl phosphate.

Belongs to the aspartate/ornithine carbamoyltransferase superfamily. ATCase family. As to quaternary structure, heterododecamer (2C3:3R2) of six catalytic PyrB chains organized as two trimers (C3), and six regulatory PyrI chains organized as three dimers (R2).

The catalysed reaction is carbamoyl phosphate + L-aspartate = N-carbamoyl-L-aspartate + phosphate + H(+). The protein operates within pyrimidine metabolism; UMP biosynthesis via de novo pathway; (S)-dihydroorotate from bicarbonate: step 2/3. In terms of biological role, catalyzes the condensation of carbamoyl phosphate and aspartate to form carbamoyl aspartate and inorganic phosphate, the committed step in the de novo pyrimidine nucleotide biosynthesis pathway. This Rhodopseudomonas palustris (strain BisB18) protein is Aspartate carbamoyltransferase catalytic subunit.